The sequence spans 394 residues: Mannosyl-3-phosphoglycerate synthase (394 aa).

This sequence belongs to the glycosyltransferase 2 family.

It localises to the cytoplasm. The catalysed reaction is (2R)-3-phosphoglycerate + GDP-alpha-D-mannose = 2-O-(alpha-D-mannosyl)-3-phosphoglycerate + GDP + H(+). Its pathway is carbohydrate biosynthesis; 2-(alpha-D-mannosyl)-D-glycerate biosynthesis; 2-(alpha-D-mannosyl)-D-glycerate from GDP-alpha-D-mannose (MPG route): step 1/2. In terms of biological role, transfers a mannosyl group from GDP-mannose to phosphoglycerate to form mannosyl-3-phosphoglycerate (MPG). This is Mannosyl-3-phosphoglycerate synthase (mngA) from Pyrococcus abyssi (strain GE5 / Orsay).